The sequence spans 339 residues: N-acetylornithine carbamoyltransferase (339 aa).

Residues 49–52 (SMRT), Trp-77, and Arg-112 each bind carbamoyl phosphate. Residue Glu-144 participates in N(2)-acetyl-L-ornithine binding. 148-151 (HPCQ) contacts carbamoyl phosphate. Residues Lys-252 and Leu-295 each coordinate N(2)-acetyl-L-ornithine. 294-295 (CL) serves as a coordination point for carbamoyl phosphate. Residue Lys-302 is modified to N6-carboxylysine. A carbamoyl phosphate-binding site is contributed by Arg-322.

The protein belongs to the aspartate/ornithine carbamoyltransferase superfamily. AOTCase family. As to quaternary structure, homotrimer.

Its subcellular location is the cytoplasm. It catalyses the reaction N(2)-acetyl-L-ornithine + carbamoyl phosphate = N(2)-acetyl-L-citrulline + phosphate + H(+). Its pathway is amino-acid biosynthesis; L-arginine biosynthesis. Carboxylation at Lys-302 increases the catalytic activity of the enzyme. Is potently inhibited by N(alpha)-acetyl-N(delta)-phosphonoacetyl-L-ornithine (PALAO). Functionally, catalyzes the transfer of the carbamoyl group from carbamoyl phosphate to the delta-amino group of N(2)-acetyl-L-ornithine to produce N(2)-acetyl-L-citrulline. This is a step in an alternative arginine biosynthesis pathway. The enzyme has no activity with ornithine. In Xanthomonas campestris pv. campestris (strain ATCC 33913 / DSM 3586 / NCPPB 528 / LMG 568 / P 25), this protein is N-acetylornithine carbamoyltransferase.